The primary structure comprises 262 residues: MSSLVSLEQLCVEFDDRRVLDNISMELEKGKITTLIGPNGAGKSTLVKVILGLQKPTSGKLVKAKKLKIGYVPQKLKLNDSLPLNVIRFLNLAGKYSKQECLDALRLVGAEHLIKSNMHRLSGGENQRVLLARALLQRPDLLVLDEPAQGVDVQGQIDLYDLIESIRHRFDCAVFMVSHDLHLVMAKTDDVICLHHHVCCSGSPATITQHPSYIALFGNAARESLAFYHHDHEHHHHDLSGSPVSGDATSCSNHNHGHHHHD.

Positions 5 to 220 (VSLEQLCVEF…PSYIALFGNA (216 aa)) constitute an ABC transporter domain. 37–44 (GPNGAGKS) serves as a coordination point for ATP. The interval 236-262 (HHDLSGSPVSGDATSCSNHNHGHHHHD) is disordered.

The protein belongs to the ABC transporter superfamily. Zinc importer (TC 3.A.1.15.5) family. As to quaternary structure, the complex is composed of two ATP-binding proteins (ZnuC), two transmembrane proteins (ZnuB) and a solute-binding protein (ZnuA).

The protein resides in the cell inner membrane. It catalyses the reaction Zn(2+)(out) + ATP(in) + H2O(in) = Zn(2+)(in) + ADP(in) + phosphate(in) + H(+)(in). In terms of biological role, part of the ABC transporter complex ZnuABC involved in zinc import. Responsible for energy coupling to the transport system. The protein is Zinc import ATP-binding protein ZnuC of Vibrio parahaemolyticus serotype O3:K6 (strain RIMD 2210633).